The chain runs to 92 residues: Small ribosomal subunit protein uS19c (92 aa).

This sequence belongs to the universal ribosomal protein uS19 family.

The protein resides in the plastid. The protein localises to the chloroplast. Its function is as follows. Protein S19 forms a complex with S13 that binds strongly to the 16S ribosomal RNA. The chain is Small ribosomal subunit protein uS19c from Piper cenocladum (Ant piper).